The chain runs to 293 residues: Phosphatidylglycerol--prolipoprotein diacylglyceryl transferase (293 aa).

A run of 4 helical transmembrane segments spans residues 45–65 (FELRWYSTLILMGFLISYFVA), 81–101 (ELIFYGVIAGIVGARLYYVLF), 115–135 (IWEGGLAIHGAVIGALLTGFL), and 144–164 (FTFLQATDLFTSVLPLGQAIG). R165 contacts a 1,2-diacyl-sn-glycero-3-phospho-(1'-sn-glycerol). The next 3 membrane-spanning stretches (helical) occupy residues 204 to 224 (PTFLYESIWDLLVFFMLSVYF), 231 to 249 (HGEVTCLYFVLYSLGRIVI), and 262 to 282 (IKAAQLLSAVLILLGFTGFLI).

It belongs to the Lgt family.

The protein localises to the cell inner membrane. The catalysed reaction is L-cysteinyl-[prolipoprotein] + a 1,2-diacyl-sn-glycero-3-phospho-(1'-sn-glycerol) = an S-1,2-diacyl-sn-glyceryl-L-cysteinyl-[prolipoprotein] + sn-glycerol 1-phosphate + H(+). The protein operates within protein modification; lipoprotein biosynthesis (diacylglyceryl transfer). Its function is as follows. Catalyzes the transfer of the diacylglyceryl group from phosphatidylglycerol to the sulfhydryl group of the N-terminal cysteine of a prolipoprotein, the first step in the formation of mature lipoproteins. The sequence is that of Phosphatidylglycerol--prolipoprotein diacylglyceryl transferase from Thermotoga maritima (strain ATCC 43589 / DSM 3109 / JCM 10099 / NBRC 100826 / MSB8).